Consider the following 315-residue polypeptide: Probable cell division protein WhiA (315 aa).

The H-T-H motif DNA-binding region spans 280 to 313; sequence SLKELGDLLDPPLSKSGVAYRMRKLEESVKEILQ.

The protein belongs to the WhiA family.

In terms of biological role, involved in cell division and chromosome segregation. In Syntrophomonas wolfei subsp. wolfei (strain DSM 2245B / Goettingen), this protein is Probable cell division protein WhiA.